The sequence spans 525 residues: GMP synthase [glutamine-hydrolyzing] (525 aa).

A Glutamine amidotransferase type-1 domain is found at 16–205 (PVLVVDFGAQ…LHDFAGIGAR (190 aa)). The active-site Nucleophile is the Cys93. Active-site residues include His179 and Glu181. The 194-residue stretch at 206-399 (WTPANIANAL…LGLPEEIVAR (194 aa)) folds into the GMPS ATP-PPase domain. 233–239 (SGGVDSA) contacts ATP.

In terms of assembly, homodimer.

The enzyme catalyses XMP + L-glutamine + ATP + H2O = GMP + L-glutamate + AMP + diphosphate + 2 H(+). It functions in the pathway purine metabolism; GMP biosynthesis; GMP from XMP (L-Gln route): step 1/1. Catalyzes the synthesis of GMP from XMP. This Mycobacterium marinum (strain ATCC BAA-535 / M) protein is GMP synthase [glutamine-hydrolyzing].